Reading from the N-terminus, the 115-residue chain is OV39 antigen (115 aa).

The sequence is that of OV39 antigen (OV39) from Onchocerca volvulus.